We begin with the raw amino-acid sequence, 295 residues long: Tyrosine recombinase XerD (295 aa).

In terms of domain architecture, Core-binding (CB) spans 1–85; the sequence is METIIEEYLR…TIRSFHQFAI (85 aa). The Tyr recombinase domain occupies 106-289; the sequence is KLPDVLNVDE…SKSQIRKMYN (184 aa). Active-site residues include R146, K170, H241, R244, and H267. The active-site O-(3'-phospho-DNA)-tyrosine intermediate is Y276.

Belongs to the 'phage' integrase family. XerD subfamily. Forms a cyclic heterotetrameric complex composed of two molecules of XerC and two molecules of XerD.

It localises to the cytoplasm. Site-specific tyrosine recombinase, which acts by catalyzing the cutting and rejoining of the recombining DNA molecules. The XerC-XerD complex is essential to convert dimers of the bacterial chromosome into monomers to permit their segregation at cell division. It also contributes to the segregational stability of plasmids. The polypeptide is Tyrosine recombinase XerD (Staphylococcus aureus (strain COL)).